The sequence spans 523 residues: 3-hydroxybenzoate--CoA/4-hydroxybenzoate--CoA ligase (523 aa).

Belongs to the ATP-dependent AMP-binding enzyme family. Benzoate-CoA ligase subfamily.

The enzyme catalyses 4-hydroxybenzoate + ATP + CoA = 4-hydroxybenzoyl-CoA + AMP + diphosphate. It carries out the reaction 3-hydroxybenzoate + ATP + CoA = 3-hydroxybenzoyl-CoA + AMP + diphosphate. Its function is as follows. Catalyzes the ligation of 3-hydroxybenzoate or 4-hydroxybenzoate and CoA at the expense of ATP. The enzyme shows low activity towards benzoate, 4-aminobenzoate, 3-aminobenzoate, 3-fluorobenzoate, 4-fluorobenzoate, 3-chlorobenzoate, and 4-chlorobenzoate. There is no activity with 3,4-dihydroxybenzoate, 2,3-dihydroxybenzoate, and 2-hydroxybenzoate as substrates. The polypeptide is 3-hydroxybenzoate--CoA/4-hydroxybenzoate--CoA ligase (hcl) (Thauera aromatica).